A 131-amino-acid polypeptide reads, in one-letter code: Small ribosomal subunit protein bS6 (131 aa).

An N6-acetyllysine modification is found at Lys93. The interval 98-131 is disordered; it reads EASPMVKAKDERRERRDDFANETADDAEAGDSEE. Residues 104–116 are compositionally biased toward basic and acidic residues; the sequence is KAKDERRERRDDF. Acidic residues predominate over residues 120–131; the sequence is TADDAEAGDSEE.

This sequence belongs to the bacterial ribosomal protein bS6 family.

Functionally, binds together with bS18 to 16S ribosomal RNA. The sequence is that of Small ribosomal subunit protein bS6 from Escherichia fergusonii (strain ATCC 35469 / DSM 13698 / CCUG 18766 / IAM 14443 / JCM 21226 / LMG 7866 / NBRC 102419 / NCTC 12128 / CDC 0568-73).